The chain runs to 545 residues: Cannabidiolic acid synthase-like 2 (545 aa).

A signal peptide spans 1–28; the sequence is MKCSTFCFWYVCKIIFFFLSFNIQISIA. Cysteine 37 and cysteine 99 are oxidised to a cystine. Residues asparagine 45, asparagine 65, asparagine 89, and asparagine 168 are each glycosylated (N-linked (GlcNAc...) asparagine). An FAD-binding PCMH-type domain is found at 77–251; it reads TTPKPLVITT…AAWKIRLVAV (175 aa). The segment at residues 114–176 is a cross-link (6-(S-cysteinyl)-8alpha-(pros-histidyl)-FAD (His-Cys)); the sequence is HDAEGMSYIS…ENLSFPAGYC (63 aa). Residue histidine 292 participates in substrate binding. N-linked (GlcNAc...) asparagine glycans are attached at residues asparagine 297, asparagine 305, asparagine 329, and asparagine 361. Residue tyrosine 417 coordinates substrate. Asparagine 467 is a glycosylation site (N-linked (GlcNAc...) asparagine). Tyrosine 484 functions as the Proton acceptor in the catalytic mechanism. Asparagine 499 carries an N-linked (GlcNAc...) asparagine glycan.

The protein belongs to the oxygen-dependent FAD-linked oxidoreductase family. It depends on FAD as a cofactor. Post-translationally, the FAD cofactor is bound via a bicovalent 6-S-cysteinyl, 8alpha-N1-histidyl FAD linkage.

It localises to the secreted. Has no cannabidiolic acid synthase activity. The polypeptide is Cannabidiolic acid synthase-like 2 (CBDAS3) (Cannabis sativa (Hemp)).